The chain runs to 328 residues: Malate dehydrogenase (328 aa).

Gly11–Gly17 contributes to the NAD(+) binding site. Substrate is bound by residues Arg94 and Arg100. Residues Asn107, Gln114, and Val131–Asn133 each bind NAD(+). Substrate-binding residues include Asn133 and Arg164. Residue His189 is the Proton acceptor of the active site.

Belongs to the LDH/MDH superfamily. MDH type 2 family.

The catalysed reaction is (S)-malate + NAD(+) = oxaloacetate + NADH + H(+). Catalyzes the reversible oxidation of malate to oxaloacetate. The sequence is that of Malate dehydrogenase from Xylella fastidiosa (strain M23).